We begin with the raw amino-acid sequence, 178 residues long: Inorganic pyrophosphatase (178 aa).

Substrate is bound by residues K31, R45, and Y57. Mg(2+)-binding residues include D67, D72, and D104. Position 141 (Y141) interacts with substrate.

This sequence belongs to the PPase family. As to quaternary structure, homohexamer. Requires Mg(2+) as cofactor.

It is found in the cytoplasm. The catalysed reaction is diphosphate + H2O = 2 phosphate + H(+). In terms of biological role, catalyzes the hydrolysis of inorganic pyrophosphate (PPi) forming two phosphate ions. This chain is Inorganic pyrophosphatase, found in Leptospira interrogans serogroup Icterohaemorrhagiae serovar copenhageni (strain Fiocruz L1-130).